The sequence spans 302 residues: Glutamate/aspartate import solute-binding protein (302 aa).

Positions 1 to 22 (MQLRKLTTAMLVMGLSAGLAHA) are cleaved as a signal peptide.

It belongs to the bacterial solute-binding protein 3 family. In terms of assembly, the complex is composed of two ATP-binding proteins (GltL), two transmembrane proteins (GltJ and GltK) and a solute-binding protein (GltI).

The protein resides in the periplasm. In terms of biological role, part of the ABC transporter complex GltIJKL involved in glutamate and aspartate uptake. Binds to both glutamate and aspartate. This chain is Glutamate/aspartate import solute-binding protein (gltI), found in Salmonella typhimurium (strain LT2 / SGSC1412 / ATCC 700720).